The chain runs to 303 residues: N-acetyl-D-glucosamine kinase (303 aa).

ATP is bound by residues 4–11 (GFDVGGTK) and 133–140 (GFGGGLVF). His157, Cys177, Cys179, and Cys184 together coordinate Zn(2+).

Belongs to the ROK (NagC/XylR) family. NagK subfamily.

It carries out the reaction N-acetyl-D-glucosamine + ATP = N-acetyl-D-glucosamine 6-phosphate + ADP + H(+). It functions in the pathway cell wall biogenesis; peptidoglycan recycling. Functionally, catalyzes the phosphorylation of N-acetyl-D-glucosamine (GlcNAc) derived from cell-wall degradation, yielding GlcNAc-6-P. The chain is N-acetyl-D-glucosamine kinase from Photobacterium profundum (strain SS9).